The following is a 458-amino-acid chain: UPF0210 protein MMP1427 (458 aa).

The protein belongs to the UPF0210 family.

In Methanococcus maripaludis (strain DSM 14266 / JCM 13030 / NBRC 101832 / S2 / LL), this protein is UPF0210 protein MMP1427.